Consider the following 151-residue polypeptide: 6,7-dimethyl-8-ribityllumazine synthase (151 aa).

Residues Phe23, 55-57 (AYE), and 79-81 (AVI) each bind 5-amino-6-(D-ribitylamino)uracil. Residue 84-85 (AT) participates in (2S)-2-hydroxy-3-oxobutyl phosphate binding. The active-site Proton donor is His87. Phe111 contributes to the 5-amino-6-(D-ribitylamino)uracil binding site. Arg125 is a (2S)-2-hydroxy-3-oxobutyl phosphate binding site.

The protein belongs to the DMRL synthase family.

The catalysed reaction is (2S)-2-hydroxy-3-oxobutyl phosphate + 5-amino-6-(D-ribitylamino)uracil = 6,7-dimethyl-8-(1-D-ribityl)lumazine + phosphate + 2 H2O + H(+). Its pathway is cofactor biosynthesis; riboflavin biosynthesis; riboflavin from 2-hydroxy-3-oxobutyl phosphate and 5-amino-6-(D-ribitylamino)uracil: step 1/2. Functionally, catalyzes the formation of 6,7-dimethyl-8-ribityllumazine by condensation of 5-amino-6-(D-ribitylamino)uracil with 3,4-dihydroxy-2-butanone 4-phosphate. This is the penultimate step in the biosynthesis of riboflavin. This Leptospira interrogans serogroup Icterohaemorrhagiae serovar Lai (strain 56601) protein is 6,7-dimethyl-8-ribityllumazine synthase.